The following is a 247-amino-acid chain: 5-oxoprolinase subunit A (247 aa).

Belongs to the LamB/PxpA family. In terms of assembly, forms a complex composed of PxpA, PxpB and PxpC.

The enzyme catalyses 5-oxo-L-proline + ATP + 2 H2O = L-glutamate + ADP + phosphate + H(+). In terms of biological role, catalyzes the cleavage of 5-oxoproline to form L-glutamate coupled to the hydrolysis of ATP to ADP and inorganic phosphate. This chain is 5-oxoprolinase subunit A, found in Klebsiella pneumoniae subsp. pneumoniae (strain ATCC 700721 / MGH 78578).